Here is a 471-residue protein sequence, read N- to C-terminus: Paraneoplastic antigen-like protein 8A (471 aa).

Disordered stretches follow at residues 188–300 (SAAG…EGSA) and 321–471 (ASRG…PSAV). Residues 238-247 (HSRRKRQKKT) are compositionally biased toward basic residues. The segment covering 256–269 (KKSQGSHSHSSASL) has biased composition (low complexity). Residues 270–287 (KHPEADDGKNRERLEHVR) are compositionally biased toward basic and acidic residues.

This sequence belongs to the PNMA family.

This Bos taurus (Bovine) protein is Paraneoplastic antigen-like protein 8A (PNMA8A).